A 1114-amino-acid chain; its full sequence is MAKATSGAAGLRLLLLLLLPLLGKVALGLYFSRDAYWEKLYVDQAAGTPLLYVHALRDAPEEVPSFRLGQHLYGTYRTRLHENNWICIQEDTGLLYLNRSLDHSSWEKLSVRNRGFPLLTVYLKVFLSPTSLREGECQWPGCARVYFSFFNTSFPACSSLKPRELCFPETRPSFRIRENRPPGTFHQFRLLPVQFLCPNISVAYRLLEGEGLPFRCAPDSLEVSTRWALDREQREKYELVAVCTVHAGAREEVVMVPFPVTVYDEDDSAPTFPAGVDTASAVVEFKRKEDTVVATLRVFDADVVPASGELVRRYTSTLLPGDTWAQQTFRVEHWPNETSVQANGSFVRATVHDYRLVLNRNLSISENRTMQLAVLVNDSDFQGPGAGVLLLHFNVSVLPVSLHLPSTYSLSVSRRARRFAQIGKVCVENCQAFSGINVQYKLHSSGANCSTLGVVTSAEDTSGILFVNDTKALRRPKCAELHYMVVATDQQTSRQAQAQLLVTVEGSYVAEEAGCPLSCAVSKRRLECEECGGLGSPTGRCEWRQGDGKGITRNFSTCSPSTKTCPDGHCDVVETQDINICPQDCLRGSIVGGHEPGEPRGIKAGYGTCNCFPEEEKCFCEPEDIQDPLCDELCRTVIAAAVLFSFIVSVLLSAFCIHCYHKFAHKPPISSAEMTFRRPAQAFPVSYSSSGARRPSLDSMENQVSVDAFKILEDPKWEFPRKNLVLGKTLGEGEFGKVVKATAFHLKGRAGYTTVAVKMLKENASPSELRDLLSEFNVLKQVNHPHVIKLYGACSQDGPLLLIVEYAKYGSLRGFLRESRKVGPGYLGSGGSRNSSSLDHPDERALTMGDLISFAWQISQGMQYLAEMKLVHRDLAARNILVAEGRKMKISDFGLSRDVYEEDSYVKRSQGRIPVKWMAIESLFDHIYTTQSDVWSFGVLLWEIVTLGGNPYPGIPPERLFNLLKTGHRMERPDNCSEEMYRLMLQCWKQEPDKRPVFADISKDLEKMMVKRRDYLDLAASTPSDSLIYDDGLSEEETPLVDCNNAPLPRALPSTWIENKLYGMSDPNWPGESPVPLTRADGTNTGFPRYPNDSVYANWMLSPSAAKLMDTFDS.

The first 28 residues, 1-28 (MAKATSGAAGLRLLLLLLLPLLGKVALG), serve as a signal peptide directing secretion. The cadherin-like region 1 (CLD1) stretch occupies residues 29–153 (LYFSRDAYWE…RVYFSFFNTS (125 aa)). The Extracellular portion of the chain corresponds to 29-635 (LYFSRDAYWE…QDPLCDELCR (607 aa)). The N-linked (GlcNAc...) asparagine glycan is linked to Asn-98. Residues Cys-137 and Cys-142 are joined by a disulfide bond. Asn-151 is a glycosylation site (N-linked (GlcNAc...) asparagine). 2 disulfides stabilise this stretch: Cys-157–Cys-197 and Cys-166–Cys-243. The Cadherin domain occupies 168-272 (PETRPSFRIR…YDEDDSAPTF (105 aa)). 2 residues coordinate Ca(2+): Glu-178 and Asn-179. N-linked (GlcNAc...) asparagine glycosylation is present at Asn-199. Asp-230, Glu-232, Asp-264, Glu-265, Asp-266, Asp-267, Ser-268, Asp-300, and Asp-302 together coordinate Ca(2+). The interval 265-379 (EDDSAPTFPA…MQLAVLVNDS (115 aa)) is cadherin-like region 3 (CLD3). Residues Asn-336, Asn-343, Asn-361, Asn-367, and Asn-377 are each glycosylated (N-linked (GlcNAc...) asparagine). A Ca(2+)-binding site is contributed by Asp-378. N-linked (GlcNAc...) asparagine glycosylation occurs at Asn-394. The segment at 405-506 (PSTYSLSVSR…QAQLLVTVEG (102 aa)) is cadherin-like region 4 (CLD4). Cysteines 426 and 430 form a disulfide. Residues Asn-448 and Asn-468 are each glycosylated (N-linked (GlcNAc...) asparagine). Intrachain disulfides connect Cys-449–Cys-478, Cys-515–Cys-531, Cys-519–Cys-541, and Cys-528–Cys-558. Residue Asn-554 is glycosylated (N-linked (GlcNAc...) asparagine). Ca(2+) is bound by residues Thr-564, Cys-565, Asp-567, His-569, Glu-574, and Asp-584. Disulfide bonds link Cys-565-Cys-581, Cys-570-Cys-585, Cys-609-Cys-620, Cys-611-Cys-618, and Cys-630-Cys-634. The chain crosses the membrane as a helical span at residues 636 to 657 (TVIAAAVLFSFIVSVLLSAFCI). The Cytoplasmic portion of the chain corresponds to 658 to 1114 (HCYHKFAHKP…AAKLMDTFDS (457 aa)). At Tyr-687 the chain carries Phosphotyrosine; by autocatalysis. Residue Ser-688 is glycosylated (O-linked (GlcNAc) serine). Phosphoserine is present on Ser-696. The region spanning 724-1016 (LVLGKTLGEG…KMMVKRRDYL (293 aa)) is the Protein kinase domain. Residues 730–738 (LGEGEFGKV) and Lys-758 each bind ATP. Semaxanib is bound at residue 805–807 (EYA). Residues Tyr-806, Tyr-809, and Tyr-826 each carry the phosphotyrosine; by autocatalysis modification. Asp-874 acts as the Proton acceptor in catalysis. A phosphotyrosine; by autocatalysis mark is found at Tyr-900, Tyr-905, Tyr-981, Tyr-1015, Tyr-1029, Tyr-1062, Tyr-1090, and Tyr-1096.

Belongs to the protein kinase superfamily. Tyr protein kinase family. Phosphorylated form interacts with the PBT domain of DOK2, DOK4 and DOK5. The phosphorylated form interacts with PLCG1 and GRB7. Interacts (not phosphorylated) with PTK2/FAK1 (via FERM domain). Extracellular cell-membrane anchored RET cadherin fragments form complex in neurons with reduced trophic status, preferentially at the contact sites between somas. Interacts with AIP in the pituitary gland; this interaction prevents the formation of the AIP-survivin complex. Interacts (inactive) with CBLC and CD2AP; dissociates upon activation by GDNF which increases CBLC:CD2AP interaction. Ca(2+) serves as cofactor. Autophosphorylated on C-terminal tyrosine residues upon ligand stimulation. Post-translationally, proteolytically cleaved by caspase-3. The soluble RET kinase fragment is able to induce cell death. The extracellular cell-membrane anchored RET cadherin fragment accelerates cell adhesion in sympathetic neurons.

The protein localises to the cell membrane. It is found in the endosome membrane. It carries out the reaction L-tyrosyl-[protein] + ATP = O-phospho-L-tyrosyl-[protein] + ADP + H(+). Repressed by 4-(3-hydroxyanilino)-quinolines derivatives, indolin-2-one-derivatives, 2-(alkylsulfanyl)-4-(3-thienyl) nicotinonitrile analogs, 3- and 4-substituted beta-carbolin-1-ones, vandetanib, motesanib, sorafenib (BAY 43-9006), cabozantinib (XL184), lenvatinib, sunitinib, nintedanib, and withaferin A (WA). Inactivation by sorafenib both reduces kinase activity and promotes lysosomal degradation. Its function is as follows. Receptor tyrosine-protein kinase involved in numerous cellular mechanisms including cell proliferation, neuronal navigation, cell migration, and cell differentiation in response to glia cell line-derived growth family factors (GDNF, NRTN, ARTN, PSPN and GDF15). In contrast to most receptor tyrosine kinases, RET requires not only its cognate ligands but also coreceptors, for activation. GDNF ligands (GDNF, NRTN, ARTN, PSPN and GDF15) first bind their corresponding GDNFR coreceptors (GFRA1, GFRA2, GFRA3, GFRA4 and GFRAL, respectively), triggering RET autophosphorylation and activation, leading to activation of downstream signaling pathways, including the MAPK- and AKT-signaling pathways. Acts as a dependence receptor via the GDNF-GFRA1 signaling: in the presence of the ligand GDNF in somatotrophs within pituitary, promotes survival and down regulates growth hormone (GH) production, but triggers apoptosis in absence of GDNF. Required for the molecular mechanisms orchestration during intestine organogenesis via the ARTN-GFRA3 signaling: involved in the development of enteric nervous system and renal organogenesis during embryonic life, and promotes the formation of Peyer's patch-like structures, a major component of the gut-associated lymphoid tissue. Mediates, through interaction with GDF15-receptor GFRAL, GDF15-induced cell-signaling in the brainstem which triggers an aversive response, characterized by nausea, vomiting, and/or loss of appetite in response to various stresses. Modulates cell adhesion via its cleavage by caspase in sympathetic neurons and mediates cell migration in an integrin (e.g. ITGB1 and ITGB3)-dependent manner. Also active in the absence of ligand, triggering apoptosis through a mechanism that requires receptor intracellular caspase cleavage. Triggers the differentiation of rapidly adapting (RA) mechanoreceptors. Involved in the development of the neural crest. Regulates nociceptor survival and size. Phosphorylates PTK2/FAK1. Functionally, isoform 1 in complex with GFRAL induces higher activation of MAPK-signaling pathway than isoform 2 in complex with GFRAL. In Homo sapiens (Human), this protein is Proto-oncogene tyrosine-protein kinase receptor Ret.